A 995-amino-acid polypeptide reads, in one-letter code: uncharacterized protein (995 aa).

The signal sequence occupies residues 1-30; it reads MFIHRMKSNLASLFLSFFLLLACEFTFSYA. Residues asparagine 115, asparagine 162, asparagine 225, asparagine 422, asparagine 478, and asparagine 486 are each glycosylated (N-linked (GlcNAc...) asparagine). The active site involves glutamate 502. Asparagine 546 and asparagine 611 each carry an N-linked (GlcNAc...) asparagine glycan. Aspartate 669 functions as the Proton donor in the catalytic mechanism. Asparagine 670, asparagine 823, asparagine 843, and asparagine 986 each carry an N-linked (GlcNAc...) asparagine glycan.

The protein belongs to the glycosyl hydrolase 31 family.

It localises to the spore wall. This is an uncharacterized protein from Schizosaccharomyces pombe (strain 972 / ATCC 24843) (Fission yeast).